A 191-amino-acid polypeptide reads, in one-letter code: Large ribosomal subunit protein uL3 (191 aa).

The disordered stretch occupies residues 119–138 (AAHGSRFHRRPGSIGNREWP).

Belongs to the universal ribosomal protein uL3 family. As to quaternary structure, part of the 50S ribosomal subunit. Forms a cluster with proteins L14 and L19.

Its function is as follows. One of the primary rRNA binding proteins, it binds directly near the 3'-end of the 23S rRNA, where it nucleates assembly of the 50S subunit. This is Large ribosomal subunit protein uL3 (rplC) from Helicobacter pylori (strain ATCC 700392 / 26695) (Campylobacter pylori).